The following is a 775-amino-acid chain: Probable ubiquitin carboxyl-terminal hydrolase creB (775 aa).

Positions 1–45 (MGSFLRSFRHNGGSTAPSVGAVPAKKEPQPPPMTPLEKRLLDMGP) are disordered. A compositionally biased stretch (basic and acidic residues) spans 36 to 45 (LEKRLLDMGP). In terms of domain architecture, USP spans 55–468 (YGMENYGNTC…CAYVLFYQET (414 aa)). Catalysis depends on Cys64, which acts as the Nucleophile. Disordered stretches follow at residues 113–146 (EAEAQAEKQKAANAQRPGMPPNPQQKPEDKDSPE) and 238–269 (ASKQPPIEKSLPAPETADSVDQSSSTGSKTPN). Polar residues predominate over residues 256 to 269 (SVDQSSSTGSKTPN). Residue His419 is the Proton acceptor of the active site. Residues 496 to 775 (LKQNGFPQSP…LRKKSFSILS (280 aa)) are disordered. Low complexity-rich tracts occupy residues 546–566 (ESAPFSPLSPLSPLSPLSPLS) and 576–585 (ERVTTVATPP). A coiled-coil region spans residues 586–653 (KNDALAKKER…ASKAEEDRRL (68 aa)). Basic and acidic residues predominate over residues 589 to 662 (ALAKKERARE…LSHENGKEKQ (74 aa)). The span at 668–679 (RLKRGSKSLSHR) shows a compositional bias: basic residues. A compositionally biased stretch (low complexity) spans 705–725 (SQTGPTSEQQQQQQQQQSPPN). Residues 739-757 (TIREDEQVNHKDSKHERTG) show a composition bias toward basic and acidic residues. Positions 758–775 (HGKWRSFSLRKKSFSILS) are enriched in basic residues.

It belongs to the peptidase C19 family. As to quaternary structure, interacts with creA, creC and qutD.

It catalyses the reaction Thiol-dependent hydrolysis of ester, thioester, amide, peptide and isopeptide bonds formed by the C-terminal Gly of ubiquitin (a 76-residue protein attached to proteins as an intracellular targeting signal).. Ubiquitin thioesterase component of the regulatory network controlling carbon source utilization through ubiquitination and deubiquitination involving creA, creB, creC, creD and acrB. Deubiquitinates the creA catabolic repressor and the quinate permease qutD. Also plays a role in response to carbon starvation and the control of extracellular proteases activity. The chain is Probable ubiquitin carboxyl-terminal hydrolase creB (creB) from Aspergillus fumigatus (strain ATCC MYA-4609 / CBS 101355 / FGSC A1100 / Af293) (Neosartorya fumigata).